The sequence spans 277 residues: 3-methyl-2-oxobutanoate hydroxymethyltransferase (277 aa).

Mg(2+)-binding residues include Asp49 and Asp88. 3-methyl-2-oxobutanoate contacts are provided by residues 49 to 50, Asp88, and Lys118; that span reads DS. Glu120 is a Mg(2+) binding site. The active-site Proton acceptor is Glu186.

This sequence belongs to the PanB family. Homodecamer; pentamer of dimers. Mg(2+) serves as cofactor.

It localises to the cytoplasm. It catalyses the reaction 3-methyl-2-oxobutanoate + (6R)-5,10-methylene-5,6,7,8-tetrahydrofolate + H2O = 2-dehydropantoate + (6S)-5,6,7,8-tetrahydrofolate. Its pathway is cofactor biosynthesis; (R)-pantothenate biosynthesis; (R)-pantoate from 3-methyl-2-oxobutanoate: step 1/2. Catalyzes the reversible reaction in which hydroxymethyl group from 5,10-methylenetetrahydrofolate is transferred onto alpha-ketoisovalerate to form ketopantoate. This Cereibacter sphaeroides (strain ATCC 17025 / ATH 2.4.3) (Rhodobacter sphaeroides) protein is 3-methyl-2-oxobutanoate hydroxymethyltransferase.